Consider the following 222-residue polypeptide: GMP/IMP nucleotidase YrfG (222 aa).

The active-site Nucleophile is the Asp9. Residues Asp9 and Asp11 each coordinate Mg(2+). Substrate contacts are provided by residues 9–11 (DVD) and Lys149. Residue Asp174 participates in Mg(2+) binding.

Belongs to the HAD-like hydrolase superfamily. The cofactor is Mg(2+). Requires Mn(2+) as cofactor. It depends on Co(2+) as a cofactor. Zn(2+) is required as a cofactor.

It catalyses the reaction a ribonucleoside 5'-phosphate + H2O = a ribonucleoside + phosphate. In terms of biological role, catalyzes the dephosphorylation of different purine nucleotides (GMP and IMP). Also hydrolyzes flavin mononucleotide (FMN). The sequence is that of GMP/IMP nucleotidase YrfG (yrfG) from Escherichia coli (strain K12).